A 485-amino-acid chain; its full sequence is Cysteine--tRNA ligase (485 aa).

Cys-27 contributes to the Zn(2+) binding site. The short motif at 29 to 39 is the 'HIGH' region element; sequence ITAYDLCHIGH. Cys-208, His-233, and Glu-237 together coordinate Zn(2+). The 'KMSKS' region signature appears at 265–269; it reads KMSKS. Lys-268 is a binding site for ATP.

It belongs to the class-I aminoacyl-tRNA synthetase family. In terms of assembly, monomer. It depends on Zn(2+) as a cofactor.

It is found in the cytoplasm. The enzyme catalyses tRNA(Cys) + L-cysteine + ATP = L-cysteinyl-tRNA(Cys) + AMP + diphosphate. In Maridesulfovibrio salexigens (strain ATCC 14822 / DSM 2638 / NCIMB 8403 / VKM B-1763) (Desulfovibrio salexigens), this protein is Cysteine--tRNA ligase.